Consider the following 145-residue polypeptide: Catabolic 3-dehydroquinase (145 aa).

The active-site Proton acceptor is the Tyr-24. The substrate site is built by Asn-77, His-83, and Asp-90. The Proton donor role is filled by His-103. Substrate contacts are provided by residues 104 to 105 and Arg-114; that span reads IT.

Belongs to the type-II 3-dehydroquinase family. As to quaternary structure, homododecamer. Adopts a ring-like structure, composed of an arrangement of two hexameric rings stacked on top of one another.

The enzyme catalyses 3-dehydroquinate = 3-dehydroshikimate + H2O. Its pathway is aromatic compound metabolism; 3,4-dihydroxybenzoate biosynthesis; 3,4-dihydroxybenzoate from 3-dehydroquinate: step 1/2. Its function is as follows. Is involved in the catabolism of quinate. Allows the utilization of quinate as carbon source via the beta-ketoadipate pathway. This is Catabolic 3-dehydroquinase from Clavispora lusitaniae (strain ATCC 42720) (Yeast).